We begin with the raw amino-acid sequence, 151 residues long: Ribonuclease H (151 aa).

One can recognise an RNase H type-1 domain in the interval 1-141; the sequence is MKHVDIFTDG…ADELARKGME (141 aa). Residues D9, E47, D69, and D133 each contribute to the Mg(2+) site.

This sequence belongs to the RNase H family. Monomer. The cofactor is Mg(2+).

The protein localises to the cytoplasm. It catalyses the reaction Endonucleolytic cleavage to 5'-phosphomonoester.. Endonuclease that specifically degrades the RNA of RNA-DNA hybrids. This Rhizobium johnstonii (strain DSM 114642 / LMG 32736 / 3841) (Rhizobium leguminosarum bv. viciae) protein is Ribonuclease H.